The sequence spans 33 residues: GLLSAVKGVLKGAGKNVAGSLMDKLKCKLFGGC.

An intrachain disulfide couples C27 to C33.

As to expression, expressed by the skin glands.

The protein resides in the secreted. Antimicrobial peptide. The polypeptide is Brevinin-2DYa (Rana dybowskii (Dybovsky's frog)).